The sequence spans 307 residues: Porphobilinogen deaminase (307 aa).

S-(dipyrrolylmethanemethyl)cysteine is present on C239.

It belongs to the HMBS family. In terms of assembly, monomer. It depends on dipyrromethane as a cofactor.

It carries out the reaction 4 porphobilinogen + H2O = hydroxymethylbilane + 4 NH4(+). It functions in the pathway porphyrin-containing compound metabolism; protoporphyrin-IX biosynthesis; coproporphyrinogen-III from 5-aminolevulinate: step 2/4. Tetrapolymerization of the monopyrrole PBG into the hydroxymethylbilane pre-uroporphyrinogen in several discrete steps. This chain is Porphobilinogen deaminase, found in Campylobacter jejuni subsp. jejuni serotype O:23/36 (strain 81-176).